Consider the following 377-residue polypeptide: Nitric oxide reductase FlRd-NAD(+) reductase (377 aa).

It belongs to the FAD-dependent oxidoreductase family. It depends on FAD as a cofactor.

It localises to the cytoplasm. It carries out the reaction 2 reduced [nitric oxide reductase rubredoxin domain] + NAD(+) + H(+) = 2 oxidized [nitric oxide reductase rubredoxin domain] + NADH. The protein operates within nitrogen metabolism; nitric oxide reduction. Its function is as follows. One of at least two accessory proteins for anaerobic nitric oxide (NO) reductase. Reduces the rubredoxin moiety of NO reductase. This is Nitric oxide reductase FlRd-NAD(+) reductase from Shigella dysenteriae serotype 1 (strain Sd197).